The primary structure comprises 624 residues: uncharacterized protein (624 aa).

The segment at Ser113–Lys249 is disordered. Over residues Thr118 to Ser225 the composition is skewed to low complexity. Basic and acidic residues predominate over residues Ala226–Lys249.

This is an uncharacterized protein from Saccharomyces cerevisiae (strain ATCC 204508 / S288c) (Baker's yeast).